The following is a 176-amino-acid chain: Large ribosomal subunit protein uL6 (176 aa).

Over residues 153 to 170 (PEPYKGKGIRYGDEEVRR) the composition is skewed to basic and acidic residues. The segment at 153–176 (PEPYKGKGIRYGDEEVRRKEAKKK) is disordered.

The protein belongs to the universal ribosomal protein uL6 family. In terms of assembly, part of the 50S ribosomal subunit.

In terms of biological role, this protein binds to the 23S rRNA, and is important in its secondary structure. It is located near the subunit interface in the base of the L7/L12 stalk, and near the tRNA binding site of the peptidyltransferase center. In Chromohalobacter salexigens (strain ATCC BAA-138 / DSM 3043 / CIP 106854 / NCIMB 13768 / 1H11), this protein is Large ribosomal subunit protein uL6.